A 100-amino-acid chain; its full sequence is UPF0235 protein TC_0667 (100 aa).

It belongs to the UPF0235 family.

The sequence is that of UPF0235 protein TC_0667 from Chlamydia muridarum (strain MoPn / Nigg).